An 89-amino-acid polypeptide reads, in one-letter code: Small ribosomal subunit protein uS15 (89 aa).

Belongs to the universal ribosomal protein uS15 family. As to quaternary structure, part of the 30S ribosomal subunit. Forms a bridge to the 50S subunit in the 70S ribosome, contacting the 23S rRNA.

In terms of biological role, one of the primary rRNA binding proteins, it binds directly to 16S rRNA where it helps nucleate assembly of the platform of the 30S subunit by binding and bridging several RNA helices of the 16S rRNA. Its function is as follows. Forms an intersubunit bridge (bridge B4) with the 23S rRNA of the 50S subunit in the ribosome. This Paracoccus denitrificans (strain Pd 1222) protein is Small ribosomal subunit protein uS15.